Consider the following 326-residue polypeptide: ATP synthase gamma chain (326 aa).

The protein belongs to the ATPase gamma chain family. In terms of assembly, F-type ATPases have 2 components, CF(1) - the catalytic core - and CF(0) - the membrane proton channel. CF(1) has five subunits: alpha(3), beta(3), gamma(1), delta(1), epsilon(1). CF(0) has three main subunits: a, b and c.

It is found in the cell membrane. Produces ATP from ADP in the presence of a proton gradient across the membrane. The gamma chain is believed to be important in regulating ATPase activity and the flow of protons through the CF(0) complex. This is ATP synthase gamma chain from Corynebacterium jeikeium (strain K411).